A 158-amino-acid chain; its full sequence is Eukaryotic translation initiation factor 5A (158 aa).

Lys51 is modified (hypusine).

Belongs to the eIF-5A family. Post-translationally, lys-51 undergoes hypusination, a unique post-translational modification that consists in the addition of a butylamino group from spermidine to lysine side chain, leading to the formation of the unusual amino acid hypusine. eIF-5As are the only known proteins to undergo this modification, which is essential for their function.

The protein resides in the cytoplasm. Its function is as follows. Translation factor that promotes translation elongation and termination, particularly upon ribosome stalling at specific amino acid sequence contexts. Binds between the exit (E) and peptidyl (P) site of the ribosome and promotes rescue of stalled ribosome: specifically required for efficient translation of polyproline-containing peptides as well as other motifs that stall the ribosome. Acts as a ribosome quality control (RQC) cofactor by joining the RQC complex to facilitate peptidyl transfer during CAT tailing step. In Candida albicans (strain SC5314 / ATCC MYA-2876) (Yeast), this protein is Eukaryotic translation initiation factor 5A (ANB1).